The primary structure comprises 277 residues: Shikimate dehydrogenase (NADP(+)) (277 aa).

Residues 15–17 and Thr-62 each bind shikimate; that span reads SLS. The active-site Proton acceptor is the Lys-66. Asn-87 and Asp-102 together coordinate shikimate. NADP(+)-binding positions include 127–131, 151–156, and Ile-219; these read GAGGA and NRTVDK. Tyr-221 contacts shikimate. Residue Gly-242 coordinates NADP(+).

It belongs to the shikimate dehydrogenase family. As to quaternary structure, homodimer.

The enzyme catalyses shikimate + NADP(+) = 3-dehydroshikimate + NADPH + H(+). It participates in metabolic intermediate biosynthesis; chorismate biosynthesis; chorismate from D-erythrose 4-phosphate and phosphoenolpyruvate: step 4/7. Involved in the biosynthesis of the chorismate, which leads to the biosynthesis of aromatic amino acids. Catalyzes the reversible NADPH linked reduction of 3-dehydroshikimate (DHSA) to yield shikimate (SA). This is Shikimate dehydrogenase (NADP(+)) from Bacillus cereus (strain AH820).